A 170-amino-acid chain; its full sequence is Pollen-specific protein C13 (170 aa).

The first 27 residues, 1–27 (MASVPAPATTTAAVILCLCVVLSCAAA), serve as a signal peptide directing secretion. 3 disulfide bridges follow: Cys43–Cys114, Cys46–Cys155, and Cys67–Cys102. N-linked (GlcNAc...) asparagine glycosylation occurs at Asn53.

The protein belongs to the Ole e I family. In terms of tissue distribution, pollen.

This is Pollen-specific protein C13 (MGS1) from Zea mays (Maize).